The chain runs to 589 residues: Isocitrate dehydrogenase kinase/phosphatase (589 aa).

ATP is bound by residues 317-323 (AAGIKGM) and Lys-338. Asp-373 is an active-site residue.

Belongs to the AceK family.

It is found in the cytoplasm. It carries out the reaction L-seryl-[isocitrate dehydrogenase] + ATP = O-phospho-L-seryl-[isocitrate dehydrogenase] + ADP + H(+). Bifunctional enzyme which can phosphorylate or dephosphorylate isocitrate dehydrogenase (IDH) on a specific serine residue. This is a regulatory mechanism which enables bacteria to bypass the Krebs cycle via the glyoxylate shunt in response to the source of carbon. When bacteria are grown on glucose, IDH is fully active and unphosphorylated, but when grown on acetate or ethanol, the activity of IDH declines drastically concomitant with its phosphorylation. This is Isocitrate dehydrogenase kinase/phosphatase from Colwellia psychrerythraea (strain 34H / ATCC BAA-681) (Vibrio psychroerythus).